Consider the following 168-residue polypeptide: 3-isopropylmalate dehydratase small subunit 2 (168 aa).

Belongs to the LeuD family. LeuD type 2 subfamily. In terms of assembly, heterodimer of LeuC and LeuD.

It catalyses the reaction (2R,3S)-3-isopropylmalate = (2S)-2-isopropylmalate. Its pathway is amino-acid biosynthesis; L-leucine biosynthesis; L-leucine from 3-methyl-2-oxobutanoate: step 2/4. In terms of biological role, catalyzes the isomerization between 2-isopropylmalate and 3-isopropylmalate, via the formation of 2-isopropylmaleate. This Methanopyrus kandleri (strain AV19 / DSM 6324 / JCM 9639 / NBRC 100938) protein is 3-isopropylmalate dehydratase small subunit 2 (leuD2).